A 116-amino-acid polypeptide reads, in one-letter code: Putative pterin-4-alpha-carbinolamine dehydratase 1 (116 aa).

It belongs to the pterin-4-alpha-carbinolamine dehydratase family.

The enzyme catalyses (4aS,6R)-4a-hydroxy-L-erythro-5,6,7,8-tetrahydrobiopterin = (6R)-L-erythro-6,7-dihydrobiopterin + H2O. In Cupriavidus pinatubonensis (strain JMP 134 / LMG 1197) (Cupriavidus necator (strain JMP 134)), this protein is Putative pterin-4-alpha-carbinolamine dehydratase 1.